We begin with the raw amino-acid sequence, 67 residues long: Large ribosomal subunit protein bL31 (67 aa).

The protein belongs to the bacterial ribosomal protein bL31 family. Type A subfamily. Part of the 50S ribosomal subunit.

Binds the 23S rRNA. This chain is Large ribosomal subunit protein bL31, found in Finegoldia magna (strain ATCC 29328 / DSM 20472 / WAL 2508) (Peptostreptococcus magnus).